A 334-amino-acid chain; its full sequence is Beta-ketoacyl-[acyl-carrier-protein] synthase III (334 aa).

Residues C116 and H256 contribute to the active site. The tract at residues Q257 to R261 is ACP-binding. N286 is an active-site residue.

Belongs to the thiolase-like superfamily. FabH family. Homodimer.

The protein resides in the cytoplasm. It catalyses the reaction malonyl-[ACP] + acetyl-CoA + H(+) = 3-oxobutanoyl-[ACP] + CO2 + CoA. It participates in lipid metabolism; fatty acid biosynthesis. In terms of biological role, catalyzes the condensation reaction of fatty acid synthesis by the addition to an acyl acceptor of two carbons from malonyl-ACP. Catalyzes the first condensation reaction which initiates fatty acid synthesis and may therefore play a role in governing the total rate of fatty acid production. Possesses both acetoacetyl-ACP synthase and acetyl transacylase activities. Its substrate specificity determines the biosynthesis of branched-chain and/or straight-chain of fatty acids. This Phocaeicola vulgatus (strain ATCC 8482 / DSM 1447 / JCM 5826 / CCUG 4940 / NBRC 14291 / NCTC 11154) (Bacteroides vulgatus) protein is Beta-ketoacyl-[acyl-carrier-protein] synthase III.